The chain runs to 299 residues: Taste receptor type 2 member 5 (299 aa).

Residue methionine 1 is a topological domain, extracellular. The helical transmembrane segment at 2-22 (LSAGLGLLMLVAVVEFLIGLI) threads the bilayer. Residues 23–45 (GNGVLVVWSFREWIRKFSWSSYN) lie on the Cytoplasmic side of the membrane. A helical membrane pass occupies residues 46–66 (LIILGLAGCRFVLQWLIILDL). The Extracellular portion of the chain corresponds to 67-82 (SLFPLFQSSRWLRYLS). The chain crosses the membrane as a helical span at residues 83–103 (IFWVLVSQASLWFATFLSVFY). Residues 104–127 (CKKITTFDHPAYLWLKQRAYNLSL) are Cytoplasmic-facing. A helical transmembrane segment spans residues 128–148 (WCLLGYFIINLLLTVQIGLMF). Residues 149–175 (YHPPQGNSSIRYPFESWQYLYAFRLNS) lie on the Extracellular side of the membrane. N-linked (GlcNAc...) asparagine glycosylation occurs at asparagine 155. The helical transmembrane segment at 176–196 (GSYLPLMVFLVSSGMLIVSLY) threads the bilayer. The Cytoplasmic portion of the chain corresponds to 197-223 (THHKKMKVHSAGRRDVRAKAHITALKS). Residues 224-244 (LGCFLLLHLVYIMASPFSIAS) traverse the membrane as a helical segment. The Extracellular segment spans residues 245–253 (KTYPPDLTS). A helical membrane pass occupies residues 254 to 274 (VFIWETLMAAYPSLHSLILIM). Topologically, residues 275 to 299 (GIPRVKQTCQKIXWKTVCARRCWGP) are cytoplasmic.

Belongs to the G-protein coupled receptor T2R family.

The protein resides in the membrane. In terms of biological role, receptor that may play a role in the perception of bitterness and is gustducin-linked. May play a role in sensing the chemical composition of the gastrointestinal content. The activity of this receptor may stimulate alpha gustducin, mediate PLC-beta-2 activation and lead to the gating of TRPM5. This Pan troglodytes (Chimpanzee) protein is Taste receptor type 2 member 5 (TAS2R5).